The primary structure comprises 934 residues: Bifunctional uridylyltransferase/uridylyl-removing enzyme (934 aa).

The interval 1–379 (MSAHDLKLEE…TFSRRKRKLS (379 aa)) is uridylyltransferase. The segment at 380–736 (DDGAFISENH…AKPHAFEAVT (357 aa)) is uridylyl-removing. The region spanning 496–613 (VDEHLLRCIA…IDFADTVQTM (118 aa)) is the HD domain. ACT domains follow at residues 737-818 (EITV…DMLA) and 848-931 (VIEV…RSPQ).

The protein belongs to the GlnD family. Mg(2+) is required as a cofactor.

The enzyme catalyses [protein-PII]-L-tyrosine + UTP = [protein-PII]-uridylyl-L-tyrosine + diphosphate. The catalysed reaction is [protein-PII]-uridylyl-L-tyrosine + H2O = [protein-PII]-L-tyrosine + UMP + H(+). Its activity is regulated as follows. Uridylyltransferase (UTase) activity is inhibited by glutamine, while glutamine activates uridylyl-removing (UR) activity. Its function is as follows. Modifies, by uridylylation and deuridylylation, the PII regulatory proteins (GlnB and homologs), in response to the nitrogen status of the cell that GlnD senses through the glutamine level. Under low glutamine levels, catalyzes the conversion of the PII proteins and UTP to PII-UMP and PPi, while under higher glutamine levels, GlnD hydrolyzes PII-UMP to PII and UMP (deuridylylation). Thus, controls uridylylation state and activity of the PII proteins, and plays an important role in the regulation of nitrogen assimilation and metabolism. The sequence is that of Bifunctional uridylyltransferase/uridylyl-removing enzyme from Brucella abortus (strain S19).